A 347-amino-acid polypeptide reads, in one-letter code: UDP-3-O-acylglucosamine N-acyltransferase (347 aa).

The active-site Proton acceptor is the H242.

This sequence belongs to the transferase hexapeptide repeat family. LpxD subfamily. As to quaternary structure, homotrimer.

It carries out the reaction a UDP-3-O-[(3R)-3-hydroxyacyl]-alpha-D-glucosamine + a (3R)-hydroxyacyl-[ACP] = a UDP-2-N,3-O-bis[(3R)-3-hydroxyacyl]-alpha-D-glucosamine + holo-[ACP] + H(+). Its pathway is bacterial outer membrane biogenesis; LPS lipid A biosynthesis. Catalyzes the N-acylation of UDP-3-O-acylglucosamine using 3-hydroxyacyl-ACP as the acyl donor. Is involved in the biosynthesis of lipid A, a phosphorylated glycolipid that anchors the lipopolysaccharide to the outer membrane of the cell. The polypeptide is UDP-3-O-acylglucosamine N-acyltransferase (Dechloromonas aromatica (strain RCB)).